Reading from the N-terminus, the 188-residue chain is PRA1 family protein 3 (188 aa).

Met-1 is subject to N-acetylmethionine. Residues 1 to 35 lie on the Cytoplasmic side of the membrane; the sequence is MDVNIAPLRAWDDFFPGSDRFARPDFRDISKWNNR. 2 consecutive transmembrane segments (helical) span residues 36 to 56 and 57 to 77; these read VVSN…MMIS and VVGF…VLVF. Topologically, residues 78-93 are cytoplasmic; it reads TGFVWAAHNKDILRRL. A run of 2 helical transmembrane segments spans residues 94–114 and 115–135; these read KKQY…FLIS and MFGG…LMFI. The segment at 103 to 117 is required for homodimer formation and heterodimer formation with ARL6IP1; it reads MVVMLASYFLISMFG. Over 136-188 the chain is Cytoplasmic; that stretch reads HASLRLRNLKNKLENKIEGIGLKRTPMGIVLDALEQQEENISKFADYISKVNE. Positions 136–188 are targeting to endoplasmic reticulum membrane; that stretch reads HASLRLRNLKNKLENKIEGIGLKRTPMGIVLDALEQQEENISKFADYISKVNE.

The protein belongs to the PRA1 family. Homodimer. Heterodimer with ARL6IP1. Forms multimers. Interacts with ARL6. Interacts with prenylated RAB1A and RAB3A. Interacts with SLC1A1/EAAC1. Interacts with RTN2 (via first transmembrane domain). Does not interact with VAMP1, VAMP2 or VAMP3.

It localises to the endoplasmic reticulum membrane. Its subcellular location is the cell membrane. The protein resides in the cytoplasm. It is found in the cytoskeleton. In terms of biological role, regulates intracellular concentrations of taurine and glutamate. Negatively modulates SLC1A1/EAAC1 glutamate transport activity by decreasing its affinity for glutamate in a PKC activity-dependent manner. Plays a role in the retention of SLC1A1/EAAC1 in the endoplasmic reticulum. This is PRA1 family protein 3 (ARL6IP5) from Sus scrofa (Pig).